A 212-amino-acid polypeptide reads, in one-letter code: ATP-dependent dethiobiotin synthetase BioD (212 aa).

An ATP-binding site is contributed by G13–V18. T17 is a Mg(2+) binding site. Residue K33 is part of the active site. Position 37 (S37) interacts with substrate. E100 contacts Mg(2+). ATP is bound by residues E100–G103 and P184–L186.

It belongs to the dethiobiotin synthetase family. Homodimer. Requires Mg(2+) as cofactor.

It is found in the cytoplasm. It carries out the reaction (7R,8S)-7,8-diammoniononanoate + CO2 + ATP = (4R,5S)-dethiobiotin + ADP + phosphate + 3 H(+). Its pathway is cofactor biosynthesis; biotin biosynthesis; biotin from 7,8-diaminononanoate: step 1/2. Catalyzes a mechanistically unusual reaction, the ATP-dependent insertion of CO2 between the N7 and N8 nitrogen atoms of 7,8-diaminopelargonic acid (DAPA, also called 7,8-diammoniononanoate) to form a ureido ring. This Rhodopseudomonas palustris (strain TIE-1) protein is ATP-dependent dethiobiotin synthetase BioD.